The following is a 544-amino-acid chain: CTP synthase (544 aa).

An amidoligase domain region spans residues 1–266; it reads MTKFIFVTGG…DDLICERFGL (266 aa). Residue serine 13 coordinates CTP. Serine 13 serves as a coordination point for UTP. ATP is bound by residues 14-19 and aspartate 71; that span reads SLGKGI. Positions 71 and 140 each coordinate Mg(2+). Residues 147 to 149, 187 to 192, and lysine 223 contribute to the CTP site; these read DIE and KTKPTQ. UTP-binding positions include 187-192 and lysine 223; that span reads KTKPTQ. Positions 291–543 constitute a Glutamine amidotransferase type-1 domain; sequence TVAMVGKYVE…VKAAKNYSEA (253 aa). Glycine 354 is an L-glutamine binding site. Catalysis depends on cysteine 381, which acts as the Nucleophile; for glutamine hydrolysis. L-glutamine-binding positions include 382–385, glutamate 404, and arginine 471; that span reads LGMQ. Residues histidine 516 and glutamate 518 contribute to the active site.

Belongs to the CTP synthase family. As to quaternary structure, homotetramer.

It catalyses the reaction UTP + L-glutamine + ATP + H2O = CTP + L-glutamate + ADP + phosphate + 2 H(+). The catalysed reaction is L-glutamine + H2O = L-glutamate + NH4(+). The enzyme catalyses UTP + NH4(+) + ATP = CTP + ADP + phosphate + 2 H(+). Its pathway is pyrimidine metabolism; CTP biosynthesis via de novo pathway; CTP from UDP: step 2/2. With respect to regulation, allosterically activated by GTP, when glutamine is the substrate; GTP has no effect on the reaction when ammonia is the substrate. The allosteric effector GTP functions by stabilizing the protein conformation that binds the tetrahedral intermediate(s) formed during glutamine hydrolysis. Inhibited by the product CTP, via allosteric rather than competitive inhibition. Catalyzes the ATP-dependent amination of UTP to CTP with either L-glutamine or ammonia as the source of nitrogen. Regulates intracellular CTP levels through interactions with the four ribonucleotide triphosphates. This is CTP synthase from Psychrobacter cryohalolentis (strain ATCC BAA-1226 / DSM 17306 / VKM B-2378 / K5).